Here is a 458-residue protein sequence, read N- to C-terminus: Peptidyl-prolyl cis-trans isomerase FKBP4 (458 aa).

Met1 is modified (N-acetylmethionine; in peptidyl-prolyl cis-trans isomerase FKBP4; alternate). Positions 1–24 (MTAEEMKAAENGAQSAPLPLEGVD) are disordered. Residue Thr2 is modified to N-acetylthreonine; in peptidyl-prolyl cis-trans isomerase FKBP4, N-terminally processed; partial. Positions 50–138 (GDRVFVHYTG…VFEVELFEFK (89 aa)) constitute a PPIase FKBP-type 1 domain. A Phosphothreonine; by CK2 modification is found at Thr143. The 87-residue stretch at 167–253 (GAMVEVALEG…RYEVRLKSFE (87 aa)) folds into the PPIase FKBP-type 2 domain. At Tyr220 the chain carries Phosphotyrosine. The tract at residues 267 to 400 (LEQSNIVKER…TQLAVCQQRT (134 aa)) is interaction with tubulin. 3 TPR repeats span residues 270 to 303 (SNIV…LEYE), 319 to 352 (LASH…DSNN), and 353 to 386 (EKGL…YPSN). An N6-acetyllysine modification is found at Lys282. Arg373 carries the omega-N-methylarginine modification. The tract at residues 428–458 (EVAAGDHPTDAEMKGERNNVAENQSRVETEA) is disordered. The segment covering 434–458 (HPTDAEMKGERNNVAENQSRVETEA) has biased composition (basic and acidic residues). Residue Thr436 is modified to Phosphothreonine. A Glycyl lysine isopeptide (Lys-Gly) (interchain with G-Cter in SUMO1) cross-link involves residue Lys441. A Phosphoserine modification is found at Ser452.

In terms of assembly, homodimer. Interacts with GLMN. Associates with HSP90AA1 and HSPA1A/HSPA1B in steroid hormone receptor complexes. Also interacts with peroxisomal phytanoyl-CoA alpha-hydroxylase (PHYH). Interacts with NR3C1 and dynein. Interacts with HSF1 in the HSP90 complex. Associates with tubulin. Interacts with MAPT/TAU. Interacts (via TPR domain) with S100A1, S100A2 and S100A6; the interaction is Ca(2+) dependent. Interaction with S100A1 and S100A2 (but not with S100A6) leads to inhibition of FKBP4-HSP90 interaction. Interacts with dynein; contributes to NR3C1 transport to the nucleus. In terms of processing, phosphorylation by CK2 results in loss of HSP90 binding activity.

Its subcellular location is the cytoplasm. It is found in the cytosol. The protein localises to the mitochondrion. It localises to the nucleus. The protein resides in the cytoskeleton. The enzyme catalyses [protein]-peptidylproline (omega=180) = [protein]-peptidylproline (omega=0). Its activity is regulated as follows. Inhibited by FK506. Its function is as follows. Immunophilin protein with PPIase and co-chaperone activities. Component of steroid receptors heterocomplexes through interaction with heat-shock protein 90 (HSP90). May play a role in the intracellular trafficking of heterooligomeric forms of steroid hormone receptors between cytoplasm and nuclear compartments. The isomerase activity controls neuronal growth cones via regulation of TRPC1 channel opening. Also acts as a regulator of microtubule dynamics by inhibiting MAPT/TAU ability to promote microtubule assembly. May have a protective role against oxidative stress in mitochondria. This chain is Peptidyl-prolyl cis-trans isomerase FKBP4 (Fkbp4), found in Mus musculus (Mouse).